Consider the following 110-residue polypeptide: uncharacterized protein (110 aa).

Disordered regions lie at residues 1–42 (MEWG…RAQQ) and 66–110 (RQLG…AAEP). Residues 36 to 68 (REERAQQLLDAVEQRQRQLLDTIAACEEMLRQL) adopt a coiled-coil conformation.

This is an uncharacterized protein from Homo sapiens (Human).